Reading from the N-terminus, the 256-residue chain is Protein FixA (256 aa).

This sequence belongs to the ETF beta-subunit/FixA family. In terms of assembly, heterodimer of FixA and FixB.

Its pathway is amine and polyamine metabolism; carnitine metabolism. In terms of biological role, required for anaerobic carnitine reduction. May bring reductant to CaiA. This chain is Protein FixA, found in Salmonella agona (strain SL483).